The following is a 296-amino-acid chain: tRNA (guanine-N(7)-)-methyltransferase (296 aa).

Residues 1–26 form a disordered region; that stretch reads MSKRTREESEMEAGPSTASPGVSVSP. S-adenosyl-L-methionine is bound by residues glycine 101, 124 to 125, 168 to 169, and leucine 188; these read EI and NS. The active site involves aspartate 191. 266–268 is a binding site for S-adenosyl-L-methionine; sequence TEE.

It belongs to the class I-like SAM-binding methyltransferase superfamily. TrmB family. In terms of assembly, forms a complex with TRM82.

It is found in the nucleus. The catalysed reaction is guanosine(46) in tRNA + S-adenosyl-L-methionine = N(7)-methylguanosine(46) in tRNA + S-adenosyl-L-homocysteine. Its pathway is tRNA modification; N(7)-methylguanine-tRNA biosynthesis. Catalyzes the formation of N(7)-methylguanine at position 46 (m7G46) in tRNA. The protein is tRNA (guanine-N(7)-)-methyltransferase of Cryptococcus neoformans var. neoformans serotype D (strain JEC21 / ATCC MYA-565) (Filobasidiella neoformans).